The primary structure comprises 348 residues: Maintenance of mitochondrial morphology protein 1 (348 aa).

Residues M1–G35 are Lumenal-facing. A helical transmembrane segment spans residues L36–F56. The Cytoplasmic segment spans residues S57 to E348. The SMP-LTD domain occupies N114–P323. The interval R328–E348 is disordered.

The protein belongs to the MMM1 family. Homodimer. Component of the ER-mitochondria encounter structure (ERMES) or MDM complex, composed of MMM1, MDM10, MDM12 and MDM34. An MMM1 homodimer associates with one molecule of MDM12 on each side in a pairwise head-to-tail manner, and the SMP-LTD domains of MMM1 and MDM12 generate a continuous hydrophobic tunnel for phospholipid trafficking.

Its subcellular location is the endoplasmic reticulum membrane. In terms of biological role, component of the ERMES/MDM complex, which serves as a molecular tether to connect the endoplasmic reticulum (ER) and mitochondria. Components of this complex are involved in the control of mitochondrial shape and protein biogenesis, and function in nonvesicular lipid trafficking between the ER and mitochondria. The MDM12-MMM1 subcomplex functions in the major beta-barrel assembly pathway that is responsible for biogenesis of all outer membrane beta-barrel proteins, and acts in a late step after the SAM complex. The MDM10-MDM12-MMM1 subcomplex further acts in the TOM40-specific pathway after the action of the MDM12-MMM1 complex. Essential for establishing and maintaining the structure of mitochondria and maintenance of mtDNA nucleoids. In Clavispora lusitaniae (strain ATCC 42720) (Yeast), this protein is Maintenance of mitochondrial morphology protein 1.